Reading from the N-terminus, the 242-residue chain is Ubiquitin-conjugating enzyme E2 6 (242 aa).

The Cytoplasmic portion of the chain corresponds to 1 to 217 (MASRQAYKRL…QPAGNGTTSN (217 aa)). The UBC core domain maps to 5 to 163 (QAYKRLSKEY…FPELAEQNRR (159 aa)). Residue Cys87 is the Glycyl thioester intermediate of the active site. The chain crosses the membrane as a helical span at residues 218-240 (SIGRSLLFVLFSLAALLVAVCYT).

It belongs to the ubiquitin-conjugating enzyme family.

It is found in the endoplasmic reticulum membrane. The catalysed reaction is S-ubiquitinyl-[E1 ubiquitin-activating enzyme]-L-cysteine + [E2 ubiquitin-conjugating enzyme]-L-cysteine = [E1 ubiquitin-activating enzyme]-L-cysteine + S-ubiquitinyl-[E2 ubiquitin-conjugating enzyme]-L-cysteine.. Its pathway is protein modification; protein ubiquitination. In terms of biological role, catalyzes the covalent attachment of ubiquitin to other proteins. Functions in degradation of misfolded or regulated proteins localized in the endoplasmic reticulum (ER) lumen or membrane via the ubiquitin-proteasome system. Cognate E2 conjugating enzyme for the DOA10 ubiquitin ligase complex, which is part of the ERAD-C pathway responsible for the rapid degradation of membrane proteins with misfolded cytoplasmic domains. The protein is Ubiquitin-conjugating enzyme E2 6 (UBC6) of Eremothecium gossypii (strain ATCC 10895 / CBS 109.51 / FGSC 9923 / NRRL Y-1056) (Yeast).